Here is a 951-residue protein sequence, read N- to C-terminus: Kinase suppressor of Ras 2 (951 aa).

The tract at residues 237–298 (PPPPPLESGH…PGTPPPSSRK (62 aa)) is disordered. Over residues 260–274 (RTPPRTPNIVTTVTP) the composition is skewed to low complexity. Residues Thr273 and Thr277 each carry the phosphothreonine modification. Residues 413 to 457 (KHRFSTKYWMSQTCTVCGKGMLFGLKCKNCKLKCHNKCTKEAPPC) form a Phorbol-ester/DAG-type zinc finger. 8 residues coordinate Zn(2+): His414, Cys426, Cys429, Cys439, Cys442, His447, Cys450, and Cys457. Ser475 is subject to Phosphoserine; by MARK3. Disordered stretches follow at residues 489-559 (RYSD…QKKN) and 614-634 (EPTSENEESHNEAEESEDEFE). Polar residues predominate over residues 494-503 (HISQTLPKTN). Residue Thr498 is modified to Phosphothreonine. The segment covering 518 to 531 (SSSNPSSTTSSTPS) has biased composition (low complexity). Positions 532-552 (SPAPPLPPSATPPSPLHPSPQ) are enriched in pro residues. Positions 667–932 (LEIGELIGKG…TKLMDMLEKL (266 aa)) constitute a Protein kinase domain. 673 to 681 (IGKGRFGQV) serves as a coordination point for ATP. Asp787 (proton donor/acceptor) is an active-site residue. The ATP site is built by Lys789 and Asp804.

Belongs to the protein kinase superfamily. TKL Ser/Thr protein kinase family. As to quaternary structure, heterodimerizes (via N-terminus) with BRAF (via N-terminus) in a MAP2K1/MEK1-dependent manner. Interacts with BRAF; this increases the low intrinsic protein kinase activity of KSR2. Interacts with MAP2K1, forming a heterodimer that can dimerize to form a heterotetramer. Interacts with MAP3K8, MAPK, RAS and RAF. In terms of processing, phosphorylated on Ser-475 by MARK3.

Its subcellular location is the cytoplasm. It is found in the membrane. It carries out the reaction L-seryl-[protein] + ATP = O-phospho-L-seryl-[protein] + ADP + H(+). The catalysed reaction is L-threonyl-[protein] + ATP = O-phospho-L-threonyl-[protein] + ADP + H(+). In terms of biological role, location-regulated scaffold connecting MEK to RAF. Has very low protein kinase activity and can phosphorylate MAP2K1 at several Ser and Thr residues with very low efficiency (in vitro). Acts as MAP2K1/MEK1-dependent allosteric activator of BRAF; upon binding to MAP2K1/MEK1, dimerizes with BRAF and promotes BRAF-mediated phosphorylation of MAP2K1/MEK1. Interaction with BRAF enhances KSR2-mediated phosphorylation of MAP2K1 (in vitro). Blocks MAP3K8 kinase activity and MAP3K8-mediated signaling. Acts as a negative regulator of MAP3K3-mediated activation of ERK, JNK and NF-kappa-B pathways, inhibiting MAP3K3-mediated interleukin-8 production. This is Kinase suppressor of Ras 2 from Mus musculus (Mouse).